The chain runs to 135 residues: HVA22-like protein d (135 aa).

3 consecutive transmembrane segments (helical) span residues 11 to 31 (LHSGAGPIVMLLYPLYASVIA), 42 to 62 (QWLAYWIIYSFLSLTELILQS), and 63 to 83 (LIEWIPIWYTVKLVFVAWLVL).

It belongs to the DP1 family. In terms of tissue distribution, predominantly expressed in flower buds.

The protein localises to the membrane. In Arabidopsis thaliana (Mouse-ear cress), this protein is HVA22-like protein d (HVA22D).